The following is a 290-amino-acid chain: 4-hydroxy-tetrahydrodipicolinate synthase (290 aa).

Thr-44 serves as a coordination point for pyruvate. The active-site Proton donor/acceptor is Tyr-132. Residue Lys-160 is the Schiff-base intermediate with substrate of the active site. Residue Ile-202 coordinates pyruvate.

The protein belongs to the DapA family. As to quaternary structure, homotetramer; dimer of dimers.

The protein resides in the cytoplasm. It carries out the reaction L-aspartate 4-semialdehyde + pyruvate = (2S,4S)-4-hydroxy-2,3,4,5-tetrahydrodipicolinate + H2O + H(+). The protein operates within amino-acid biosynthesis; L-lysine biosynthesis via DAP pathway; (S)-tetrahydrodipicolinate from L-aspartate: step 3/4. Functionally, catalyzes the condensation of (S)-aspartate-beta-semialdehyde [(S)-ASA] and pyruvate to 4-hydroxy-tetrahydrodipicolinate (HTPA). The protein is 4-hydroxy-tetrahydrodipicolinate synthase of Legionella pneumophila subsp. pneumophila (strain Philadelphia 1 / ATCC 33152 / DSM 7513).